Reading from the N-terminus, the 255-residue chain is Endonuclease V (255 aa).

2 residues coordinate Mg(2+): Asp42 and Asp110.

The protein belongs to the endonuclease V family. Mg(2+) is required as a cofactor.

It localises to the cytoplasm. The enzyme catalyses Endonucleolytic cleavage at apurinic or apyrimidinic sites to products with a 5'-phosphate.. DNA repair enzyme involved in the repair of deaminated bases. Selectively cleaves double-stranded DNA at the second phosphodiester bond 3' to a deoxyinosine leaving behind the intact lesion on the nicked DNA. The polypeptide is Endonuclease V (Aeropyrum pernix (strain ATCC 700893 / DSM 11879 / JCM 9820 / NBRC 100138 / K1)).